Reading from the N-terminus, the 484-residue chain is FAD-dependent monooxygenase aurC (484 aa).

The first 21 residues, 1–21, serve as a signal peptide directing secretion; the sequence is MGAYSFRVIIVGGSITGMTLA. FAD-binding residues include glutamate 35, glycine 49, and arginine 108. Tyrosine 216 is an active-site residue. FAD contacts are provided by aspartate 308 and glycine 321. The helical transmembrane segment at 451-471 threads the bilayer; the sequence is FAVASLIVLIVVLARALDSPA.

The protein belongs to the paxM FAD-dependent monooxygenase family. FAD is required as a cofactor.

It is found in the membrane. It functions in the pathway polyketide biosynthesis. Its function is as follows. FAD-dependent monooxygenase; part of the gene cluster that mediates the biosynthesis of aurovertins, fungal polyketides that exhibit potent inhibition of adenosine triphosphate synthase. Tha biosynthesis starts with the HR-PKS aurA that selects propionate as the starter unit; synthesizes a hexa-ene chain through the repeated functions of the KR and DH domains in the first six iterations; selectively introduces three alpha-methyl substitutions at C4, C6, and C16 using the S-adensylmethionine-dependent cMET; and shuts off KR and DH in the last three iterations to afford a 1,3,5-triketo portion that can undergo intramolecular cyclization to yield the alpha-pyrone intermediate. AurE may act as a cyclase and enhances the rate of pyrone formation and product release of aurA. The methyltransferase aurB then methylates the C17 hydroxyl group. C17 methylation is required to initiate epoxidation by the downstream monooxygenase aurC. The monooxygenase aurC and the epoxide hydrolase aurD can iteratively transform the terminal triene portion of the methylated precursor into the dioxabicyclo[3.2.1]octane scaffold of aurovertin E. Epoxidation modifications of the precursor occur in two separate steps; bis-epoxidation of the two terminal olefins takes place first, followed by another epoxidation that occurs at C7-C8 after tetrahydrofuran formation. The O-acyltransferase aurG converts aurovertin E to aurovertin A. The chain is FAD-dependent monooxygenase aurC from Calcarisporium arbuscula (Dendryphion arbuscula).